The primary structure comprises 659 residues: Macrolide export ATP-binding/permease protein MacB (659 aa).

An ABC transporter domain is found at 10–249 (IELRGIRKRY…QPLLHHAGLS (240 aa)). An ATP-binding site is contributed by 47–54 (GSSGSGKS). The next 4 helical transmembrane spans lie at 287–307 (SLTLLGIVIGVASVIVMLAIG), 538–558 (LGLVAAVSLLVGGIGVMNVML), 594–614 (ITGGTVGVILGLTVGALLVFW), and 619–639 (VFSFGVMIGAFACAVITGLIF).

Belongs to the ABC transporter superfamily. Macrolide exporter (TC 3.A.1.122) family. As to quaternary structure, homodimer.

It is found in the cell inner membrane. Its function is as follows. Non-canonical ABC transporter that contains transmembrane domains (TMD), which form a pore in the inner membrane, and an ATP-binding domain (NBD), which is responsible for energy generation. Confers resistance against macrolides. This is Macrolide export ATP-binding/permease protein MacB from Nitrosomonas europaea (strain ATCC 19718 / CIP 103999 / KCTC 2705 / NBRC 14298).